Here is a 656-residue protein sequence, read N- to C-terminus: Acetyl-coenzyme A synthetase (656 aa).

CoA contacts are provided by residues 198–201 and threonine 316; that span reads RGGR. Residues 392 to 394, 416 to 421, aspartate 507, and arginine 522 each bind ATP; these read GEP and DTFWQT. Serine 530 contacts CoA. ATP is bound at residue arginine 533. The Mg(2+) site is built by valine 544, histidine 546, and valine 549. Residue arginine 591 coordinates CoA. N6-acetyllysine is present on lysine 616.

This sequence belongs to the ATP-dependent AMP-binding enzyme family. It depends on Mg(2+) as a cofactor. In terms of processing, acetylated. Deacetylation by the SIR2-homolog deacetylase activates the enzyme.

The enzyme catalyses acetate + ATP + CoA = acetyl-CoA + AMP + diphosphate. In terms of biological role, catalyzes the conversion of acetate into acetyl-CoA (AcCoA), an essential intermediate at the junction of anabolic and catabolic pathways. AcsA undergoes a two-step reaction. In the first half reaction, AcsA combines acetate with ATP to form acetyl-adenylate (AcAMP) intermediate. In the second half reaction, it can then transfer the acetyl group from AcAMP to the sulfhydryl group of CoA, forming the product AcCoA. In Rhodobacter capsulatus (strain ATCC BAA-309 / NBRC 16581 / SB1003), this protein is Acetyl-coenzyme A synthetase.